The sequence spans 133 residues: Probable mitochondrial pyruvate carrier 2 (133 aa).

3 helical membrane-spanning segments follow: residues 39–55, 73–91, and 99–116; these read VTNL…IVPI, ASSL…TLIS, and MLAA…YNIY.

Belongs to the mitochondrial pyruvate carrier (MPC) (TC 2.A.105) family.

The protein localises to the mitochondrion inner membrane. In terms of biological role, may mediate the uptake of pyruvate into mitochondria. In Dictyostelium discoideum (Social amoeba), this protein is Probable mitochondrial pyruvate carrier 2.